We begin with the raw amino-acid sequence, 67 residues long: Neurotoxin Cex10 (67 aa).

An LCN-type CS-alpha/beta domain is found at 1–65 (KDGYLVEVTG…TWPLPNKSCG (65 aa)). 4 disulfide bridges follow: C11–C64, C15–C40, C24–C45, and C28–C47. C64 is modified (cysteine amide). Positions 65–67 (GKK) are excised as a propeptide.

This sequence belongs to the long (4 C-C) scorpion toxin superfamily. Sodium channel inhibitor family. Beta subfamily. In terms of tissue distribution, expressed by the venom gland.

The protein localises to the secreted. Functionally, beta toxins bind voltage-independently at site-4 of sodium channels (Nav) and shift the voltage of activation toward more negative potentials thereby affecting sodium channel activation and promoting spontaneous and repetitive firing. The protein is Neurotoxin Cex10 of Centruroides exilicauda (Bark scorpion).